We begin with the raw amino-acid sequence, 171 residues long: ATP synthase subunit b (171 aa).

Residues 31-51 (FFVVLAIFLVVLAVIGTFVVP) form a helical membrane-spanning segment.

Belongs to the ATPase B chain family. As to quaternary structure, F-type ATPases have 2 components, F(1) - the catalytic core - and F(0) - the membrane proton channel. F(1) has five subunits: alpha(3), beta(3), gamma(1), delta(1), epsilon(1). F(0) has three main subunits: a(1), b(2) and c(10-14). The alpha and beta chains form an alternating ring which encloses part of the gamma chain. F(1) is attached to F(0) by a central stalk formed by the gamma and epsilon chains, while a peripheral stalk is formed by the delta and b chains.

The protein resides in the cell membrane. F(1)F(0) ATP synthase produces ATP from ADP in the presence of a proton or sodium gradient. F-type ATPases consist of two structural domains, F(1) containing the extramembraneous catalytic core and F(0) containing the membrane proton channel, linked together by a central stalk and a peripheral stalk. During catalysis, ATP synthesis in the catalytic domain of F(1) is coupled via a rotary mechanism of the central stalk subunits to proton translocation. Its function is as follows. Component of the F(0) channel, it forms part of the peripheral stalk, linking F(1) to F(0). This chain is ATP synthase subunit b, found in Mycobacterium bovis (strain ATCC BAA-935 / AF2122/97).